A 336-amino-acid polypeptide reads, in one-letter code: Holliday junction branch migration complex subunit RuvB (336 aa).

Residues 4–184 (ADRLISAGAT…FGIVQRLEFY (181 aa)) form a large ATPase domain (RuvB-L) region. Residues Ile23, Arg24, Gly65, Lys68, Thr69, Thr70, 131–133 (EDY), Arg174, Tyr184, and Arg221 each bind ATP. Thr69 is a binding site for Mg(2+). Residues 185 to 255 (QVPDLQHIVG…IAAQALDMLN (71 aa)) are small ATPAse domain (RuvB-S). Residues 258–336 (AEGFDYMDRK…HFGITPPEMP (79 aa)) are head domain (RuvB-H). Arg294, Arg313, and Arg318 together coordinate DNA.

It belongs to the RuvB family. Homohexamer. Forms an RuvA(8)-RuvB(12)-Holliday junction (HJ) complex. HJ DNA is sandwiched between 2 RuvA tetramers; dsDNA enters through RuvA and exits via RuvB. An RuvB hexamer assembles on each DNA strand where it exits the tetramer. Each RuvB hexamer is contacted by two RuvA subunits (via domain III) on 2 adjacent RuvB subunits; this complex drives branch migration. In the full resolvosome a probable DNA-RuvA(4)-RuvB(12)-RuvC(2) complex forms which resolves the HJ.

It localises to the cytoplasm. The catalysed reaction is ATP + H2O = ADP + phosphate + H(+). In terms of biological role, the RuvA-RuvB-RuvC complex processes Holliday junction (HJ) DNA during genetic recombination and DNA repair, while the RuvA-RuvB complex plays an important role in the rescue of blocked DNA replication forks via replication fork reversal (RFR). RuvA specifically binds to HJ cruciform DNA, conferring on it an open structure. The RuvB hexamer acts as an ATP-dependent pump, pulling dsDNA into and through the RuvAB complex. RuvB forms 2 homohexamers on either side of HJ DNA bound by 1 or 2 RuvA tetramers; 4 subunits per hexamer contact DNA at a time. Coordinated motions by a converter formed by DNA-disengaged RuvB subunits stimulates ATP hydrolysis and nucleotide exchange. Immobilization of the converter enables RuvB to convert the ATP-contained energy into a lever motion, pulling 2 nucleotides of DNA out of the RuvA tetramer per ATP hydrolyzed, thus driving DNA branch migration. The RuvB motors rotate together with the DNA substrate, which together with the progressing nucleotide cycle form the mechanistic basis for DNA recombination by continuous HJ branch migration. Branch migration allows RuvC to scan DNA until it finds its consensus sequence, where it cleaves and resolves cruciform DNA. The sequence is that of Holliday junction branch migration complex subunit RuvB from Salmonella agona (strain SL483).